Consider the following 1332-residue polypeptide: DEMETER-like protein 2 (1332 aa).

The span at 1–23 shows a compositional bias: basic and acidic residues; it reads MEVEGEVREKEARVKGRQPETEV. 3 disordered regions span residues 1 to 29, 137 to 242, and 280 to 317; these read MEVE…GLPQ, VSTS…TSEE, and VEGS…KKTD. A compositionally biased stretch (polar residues) spans 137 to 153; it reads VSTSTQRTEPESPQITL. Residues 223 to 236 show a composition bias toward low complexity; sequence SKAGIKKSSIAATA. Residues 301–312 are compositionally biased toward basic residues; that stretch reads PKGRRGQRRSNG. Residues 497-595 are DEMETER; sequence KVQLDPETSR…AYMDLAAEFP (99 aa). A compositionally biased stretch (polar residues) spans 739 to 753; sequence HQQDPESTIQTQDQQ. Residues 739–810 are disordered; the sequence is HQQDPESTIQ…GGRKRERTER (72 aa). Residues 763 to 777 show a composition bias toward basic residues; that stretch reads KNRKKPTTSKPKKKS. Residues 787-810 show a composition bias toward basic and acidic residues; the sequence is KSVDWDSLRKEAESGGRKRERTER. Cys-970, Cys-977, Cys-980, and Cys-986 together coordinate [4Fe-4S] cluster.

The protein belongs to the DNA glycosylase family. DEMETER subfamily. It depends on [4Fe-4S] cluster as a cofactor.

The protein localises to the nucleus. Potential transcriptional activator that may act by nicking the target promoter. Catalyzes the release of 5-methylcytosine (5-meC) from DNA by a glycosylase/lyase mechanism. The protein is DEMETER-like protein 2 (DML2) of Arabidopsis thaliana (Mouse-ear cress).